Reading from the N-terminus, the 553-residue chain is Protein spartin (553 aa).

An MIT domain is found at 15–96; sequence IRTAYKAAMT…ETELRYRLKV (82 aa). Residues 105-130 form a disordered region; sequence DDSAVEATEESRAEMDTKRPPLLAEN. Over residues 113–123 the composition is skewed to basic and acidic residues; it reads EESRAEMDTKR. A Senescence domain is found at 325–509; the sequence is IVSAADFIAS…SQNVNYITPK (185 aa).

As to quaternary structure, interacts with Eps-15 (via C-terminal region); the interaction is required for spartin localization to the NMJ presynaptic membrane. Expressed in larval brain, ventral nerve cord and neuropil (at protein level).

Its subcellular location is the presynaptic cell membrane. It is found in the early endosome. The protein resides in the lipid droplet. Functionally, during postembryonic development, functions with endocytic adapter Eps-15 in neurons to restrain synaptic growth, by inhibiting BMP signaling, and to control synaptic endocytosis. Required presynaptically for neuromuscular junction (NMJ) neurotransmission. Inhibits neuronal BMP signaling by promoting endocytic internalization and subsequent endosomal trafficking of the BMP receptor wit. In this way, regulates the Fmr1 translational regulator controlling Futsch expression to modulate neuronal microtubule stability, which controls both synaptogenesis and neuronal survival. This is Protein spartin from Drosophila melanogaster (Fruit fly).